The sequence spans 148 residues: Ribosome maturation factor RimP (148 aa).

Belongs to the RimP family.

The protein localises to the cytoplasm. Its function is as follows. Required for maturation of 30S ribosomal subunits. The polypeptide is Ribosome maturation factor RimP (Treponema denticola (strain ATCC 35405 / DSM 14222 / CIP 103919 / JCM 8153 / KCTC 15104)).